A 436-amino-acid polypeptide reads, in one-letter code: Prenyltransferase nscD (436 aa).

This sequence belongs to the tryptophan dimethylallyltransferase family.

The protein operates within secondary metabolite biosynthesis. In terms of biological role, prenyltransferase; part of the gene cluster that mediates the biosynthesis of neosartoricin B, a prenylated anthracenone that probably exhibits T-cell antiproliferative activity, suggestive of a physiological role as an immunosuppressive agent. The non-reducing polyketide synthase nscA probably synthesizes and cyclizes the decaketide backbone. The hydrolase nscB then mediates the product release through hydrolysis followed by spontaneous decarboxylation. The prenyltransferase nscD catalyzes the addition of the dimethylallyl group to the aromatic C5. The FAD-dependent monooxygenase nscC is then responsible for the stereospecific hydroxylation at C2. Neosartoricin B can be converted into two additional compounds neosartoricins C and D. Neosartoricin C is a spirocyclic compound that is cyclized through the attack of C3 hydroxyl on C14, followed by dehydration. On the other hand, neosartoricin D is a further cyclized compound in which attack of C2 on C14 in neosartoricin C results in the formation of the acetal-containing dioxabicyclo-octanone ring. Both of these compounds are novel and possibly represent related metabolites of the gene cluster. This Trichophyton rubrum (strain ATCC MYA-4607 / CBS 118892) (Athlete's foot fungus) protein is Prenyltransferase nscD.